A 228-amino-acid chain; its full sequence is MKSTRPFHPTPVITIDGPTASGKGTVAALVAAHLGFHLLDSGALYRLAALASVRYGIDAQDIDALVKLIDDLHITFREGCAQLDGVDVSNDIRAEAVGNRASAIAVHGPVRVALVARQRAFRKTPGLVADGRDMGTVIFPDAVLKVFLTASAEARAARRHKQLMQKGFSANIENLLRDLRERDARDSNRAAAPLKPAADAKLLDTSALSVDQAVDQVLQWYRALGQPA.

17–25 (GPTASGKGT) contacts ATP.

This sequence belongs to the cytidylate kinase family. Type 1 subfamily.

The protein resides in the cytoplasm. The enzyme catalyses CMP + ATP = CDP + ADP. It catalyses the reaction dCMP + ATP = dCDP + ADP. In Burkholderia vietnamiensis (strain G4 / LMG 22486) (Burkholderia cepacia (strain R1808)), this protein is Cytidylate kinase.